Consider the following 231-residue polypeptide: NADH-ubiquinone oxidoreductase chain 4 (231 aa).

6 helical membrane-spanning segments follow: residues 1 to 21 (PIAG…YGII), 34 to 54 (LFLP…LTCL), 63 to 85 (IAYS…TPWG), 89 to 111 (AMAL…NMTY), 124 to 146 (GLHN…NIAI), and 169 to 189 (TIII…HMFL).

The protein belongs to the complex I subunit 4 family.

It is found in the mitochondrion membrane. It carries out the reaction a ubiquinone + NADH + 5 H(+)(in) = a ubiquinol + NAD(+) + 4 H(+)(out). Its function is as follows. Core subunit of the mitochondrial membrane respiratory chain NADH dehydrogenase (Complex I) that is believed to belong to the minimal assembly required for catalysis. Complex I functions in the transfer of electrons from NADH to the respiratory chain. The immediate electron acceptor for the enzyme is believed to be ubiquinone. The chain is NADH-ubiquinone oxidoreductase chain 4 (MT-ND4) from Crotalus lepidus (Banded rock rattlesnake).